We begin with the raw amino-acid sequence, 504 residues long: 2,3-bisphosphoglycerate-independent phosphoglycerate mutase (504 aa).

2 residues coordinate Mn(2+): D11 and S61. The Phosphoserine intermediate role is filled by S61. Residues H122, 152–153 (RD), R183, R189, 255–258 (RNDR), and K329 contribute to the substrate site. D396, H400, D437, H438, and H455 together coordinate Mn(2+).

This sequence belongs to the BPG-independent phosphoglycerate mutase family. As to quaternary structure, monomer. It depends on Mn(2+) as a cofactor.

It catalyses the reaction (2R)-2-phosphoglycerate = (2R)-3-phosphoglycerate. Its pathway is carbohydrate degradation; glycolysis; pyruvate from D-glyceraldehyde 3-phosphate: step 3/5. Its function is as follows. Catalyzes the interconversion of 2-phosphoglycerate and 3-phosphoglycerate. This chain is 2,3-bisphosphoglycerate-independent phosphoglycerate mutase, found in Bacteroides thetaiotaomicron (strain ATCC 29148 / DSM 2079 / JCM 5827 / CCUG 10774 / NCTC 10582 / VPI-5482 / E50).